Consider the following 468-residue polypeptide: Secreted triacylglycerol lipase LIP2 (468 aa).

An N-terminal signal peptide occupies residues 1 to 22 (MFGFRLFILAAVALAYIQCAAA). Cys-125 and Cys-295 are joined by a disulfide. Residue Ser-209 is the Nucleophile of the active site. Residues Asn-242, Asn-252, and Asn-279 are each glycosylated (N-linked (GlcNAc...) asparagine). Catalysis depends on residues Asp-355 and His-389.

It belongs to the AB hydrolase superfamily. Lipase family. Class Lip subfamily.

The protein localises to the secreted. It carries out the reaction a triacylglycerol + H2O = a diacylglycerol + a fatty acid + H(+). The enzyme catalyses a monoacylglycerol + H2O = glycerol + a fatty acid + H(+). The catalysed reaction is a diacylglycerol + H2O = a monoacylglycerol + a fatty acid + H(+). Its function is as follows. Secreted lipase that hydrolyzes acylglycerol lipids such as triacylglycerols and consequently releases free fatty acid. Due to an absence of fatty acid synthase genes in Malassezia species, secretory lipases are essential for the yeast to generate free fatty acids from degradation of sebum and assimilate them as lipid sources for growth. Plays important roles not only in lipid metabolism but also in the immune response of host cells and pathogenesis. This is Secreted triacylglycerol lipase LIP2 from Malassezia furfur (Pityriasis versicolor infection agent).